Consider the following 136-residue polypeptide: Small ribosomal subunit protein uS8c (136 aa).

The protein belongs to the universal ribosomal protein uS8 family. In terms of assembly, part of the 30S ribosomal subunit.

Its subcellular location is the plastid. It is found in the chloroplast. One of the primary rRNA binding proteins, it binds directly to 16S rRNA central domain where it helps coordinate assembly of the platform of the 30S subunit. This chain is Small ribosomal subunit protein uS8c (rps8), found in Tetradesmus obliquus (Green alga).